The primary structure comprises 172 residues: 3-hydroxydecanoyl-[acyl-carrier-protein] dehydratase (172 aa).

Residue His71 is part of the active site.

This sequence belongs to the thioester dehydratase family. FabA subfamily. As to quaternary structure, homodimer.

It localises to the cytoplasm. The enzyme catalyses a (3R)-hydroxyacyl-[ACP] = a (2E)-enoyl-[ACP] + H2O. It carries out the reaction (3R)-hydroxydecanoyl-[ACP] = (2E)-decenoyl-[ACP] + H2O. It catalyses the reaction (2E)-decenoyl-[ACP] = (3Z)-decenoyl-[ACP]. It functions in the pathway lipid metabolism; fatty acid biosynthesis. In terms of biological role, necessary for the introduction of cis unsaturation into fatty acids. Catalyzes the dehydration of (3R)-3-hydroxydecanoyl-ACP to E-(2)-decenoyl-ACP and then its isomerization to Z-(3)-decenoyl-ACP. Can catalyze the dehydratase reaction for beta-hydroxyacyl-ACPs with saturated chain lengths up to 16:0, being most active on intermediate chain length. This is 3-hydroxydecanoyl-[acyl-carrier-protein] dehydratase from Serratia proteamaculans (strain 568).